A 427-amino-acid polypeptide reads, in one-letter code: Putative dipeptidase MCYG_02918 (427 aa).

The first 29 residues, 1 to 29, serve as a signal peptide directing secretion; it reads MAPERRSRLSDAGILVSLLALTSLVPVQA. Zn(2+)-binding residues include His-55, Asp-57, and Glu-167. An intrachain disulfide couples Cys-106 to Cys-196. His-194 contributes to the substrate binding site. 2 residues coordinate Zn(2+): His-238 and His-259. 2 residues coordinate substrate: Arg-270 and Asp-330. An N-linked (GlcNAc...) asparagine glycan is attached at Asn-402.

Belongs to the metallo-dependent hydrolases superfamily. Peptidase M19 family. Zn(2+) serves as cofactor.

It carries out the reaction an L-aminoacyl-L-amino acid + H2O = 2 an L-alpha-amino acid. Hydrolyzes a wide range of dipeptides. In Arthroderma otae (strain ATCC MYA-4605 / CBS 113480) (Microsporum canis), this protein is Putative dipeptidase MCYG_02918.